The sequence spans 80 residues: Defensin-like protein 51 (80 aa).

Positions 1-27 are cleaved as a signal peptide; that stretch reads MGFTKILVTFFLVGLLVISSSPQNAIA. 4 disulfides stabilise this stretch: cysteine 39–cysteine 79, cysteine 43–cysteine 66, cysteine 52–cysteine 77, and cysteine 56–cysteine 78.

This sequence belongs to the DEFL family.

The protein resides in the secreted. The protein is Defensin-like protein 51 (LCR48) of Arabidopsis thaliana (Mouse-ear cress).